A 161-amino-acid chain; its full sequence is Hydrogenase expression/formation protein HoxO (161 aa).

Belongs to the HupG/HyaE family.

The protein is Hydrogenase expression/formation protein HoxO (hoxO) of Cupriavidus necator (strain ATCC 17699 / DSM 428 / KCTC 22496 / NCIMB 10442 / H16 / Stanier 337) (Ralstonia eutropha).